A 106-amino-acid polypeptide reads, in one-letter code: Thioredoxin-2 (106 aa).

The Thioredoxin domain maps to 1–106 (MVYQVKDKAD…RLEDVIKANI (106 aa)). Catalysis depends on nucleophile residues C32 and C35. C32 and C35 form a disulfide bridge.

Belongs to the thioredoxin family. As to quaternary structure, monomer.

Its function is as follows. Participates in various redox reactions through the reversible oxidation of its active center dithiol to a disulfide and catalyzes dithiol-disulfide exchange reactions. As a reducing substrate of peroxiredoxin 1, thioredoxin 2 is preferred over thioredoxin 1. In Drosophila melanogaster (Fruit fly), this protein is Thioredoxin-2.